Here is a 1273-residue protein sequence, read N- to C-terminus: DNA-directed RNA polymerase subunit beta (1273 aa).

It belongs to the RNA polymerase beta chain family. In terms of assembly, the RNAP catalytic core consists of 2 alpha, 1 beta, 1 beta' and 1 omega subunit. When a sigma factor is associated with the core the holoenzyme is formed, which can initiate transcription.

The enzyme catalyses RNA(n) + a ribonucleoside 5'-triphosphate = RNA(n+1) + diphosphate. In terms of biological role, DNA-dependent RNA polymerase catalyzes the transcription of DNA into RNA using the four ribonucleoside triphosphates as substrates. This Onion yellows phytoplasma (strain OY-M) protein is DNA-directed RNA polymerase subunit beta.